The primary structure comprises 2515 residues: MNGQARIALPSKVDLYITHVDHVGPYLKVYGHVNRDAASLISERIRNLLPTCFAIEPSWSVERQQALLIPGTFCIFKNINGPAPGDVEYRRIRVVSADLEGQSMRAEIDFVDFGYKRTVDSHDLMFPKQPKLLQNIPLHCFQYIVLGICSEWDQTDLAEVRRLVVNQIVKITVEPTQICDQKFASLRWKDFELNEFLVQQKQIGVSVDKQLMMDHCKKLWKDNPQSPVTEYNNNSIHNSKTPMEIAREQLAVRQSLAARLDAQRSVQVTPSRPLNADAPDYTPKHLPLVNVTNVQVQMPGLNNTQKPVFVSTNPYNRANYQPAVPAAQPYVPKANPRSQYTYYNVRMNKPINAMPPPAGPHVPIQHFNQQANNVSLSYVPARFTPPPTPSIAQHQIPIPAFRTTSLTVGLTYDVVISYVENGPYLFWVHLKSSDHDLSTMMGQIERTKLKALAQAPELGTACVARFSEDGHLYRAMVCAVYAQRYRVVYVDYGNSELLSASDLFQIPPELLEIKPFAFRFALAGTKEIEPIDDSMKRIFKKSAIYRNFELTVQAPESVGSMQTCHLNQNGTNMLELLRQLKNSRQSYKKAEQLENDDAVEIRFIDSPSNFYVQKVANIGKFEQLMDEMFSYYNANQRVPDQLILGAPCIVKCDQEWYRAEILRVDDSVIVRHVDFGYEQNVKRHLIGHIAEKHLEMPRQAIKCCLKGFENSELSEDKITDQFEMLAEESNIRRRTFSVRIFRIEPDGLNVVNLLAKNLNVMKKLYKLSMPFEQYLSLEKGQFNANNTRAESVISSELNKSHILNSTSIGETENRLQEQEKEQQQKKVDVRQQQLAVEIPQAVKSVSGSKNSTDWDKRSSTSAGSKDSKRQQQQQIQRIDRHLDFSCETQSTGSYSSGMSSPRKGNRQQNGRTPIQSPRHNEKQEAKKNARFSNSESPRRSRDGQQGNQRSQNAPQGYAQKPQRQKSTLDGNISSKRSSGVGSDIASSSSESVAAAKPEKYVSLDKPYALQEMKTPSKEAASLSWWLSPFQFYIVPKSVSAKYDNIMRDMREFYRQKQHQPLQLKVGSTVVVRQRKDNAILRATVTACNHMMRKYRVFCVDTGSLITVTSEDIWQLEQRFADPPCMAHRCSFHSVVTNYDPLYIVDRMETFVPVNAKVDCEFVSKEKSNQGSNTSSTCSYTVNIFVNGASLRDMLVKAEFLTEVAPEIRVNLLAGQQIRGKFTSIRDMTSFKVQFDYGNNVNFLCTYDDAKFVKSNPNLARRFKEFYEGKSFALNVKNVCENNIVHLRPVMPLFMEDRRSFICPYPVVLSSFQALVVYTAKPYRVYVQPQAIVPSMQTLLDNMYEHYKAKGDSLKKFDVGQICAVRSSDGNWYRARISGKDSNAACFEVFYIDYGNTEEIKRDDIKALDAKFYEHASGFAVEINLPIGRPSNDTKLKARISEILEEKVVTIKSIEVRRSHLIADVILENNQSVIDLLKAEKLVPGKDLDYMRKQMEKGKSRTYEYIETVDLTLDEEEDKGRKETVSKSGSANASPKKKQHNDKDREPKKSKPAEPARTVAPQPVALKTPSPVPAEPAPVPKPATPVPEVVEVPEINPTVREAAAESKQAPAQEDPYKDLDCVVLSHCDNPAQFYVHPIDQLSKLNQLHENLQIVSPSLPQLMNVVNGADCVSMYSVDKCWYRAKIIDAELMVLLFIDYGNTDCVSDATDIKESMWSHIEPFCLPCALPIRPKGTADWVDAANGIFNESYSKVPRLEYLTQGDHYTTSYVNMYIDGEDVAKKLIADGFARPLEYLASGCSCYISHVNGICDFFIQLERDSKALELIELYLRKKDTLKPLEGFEKGLIVAALFEDDELWYRAQLQKELPDSRYEVLFIDYGNTSTTSKCLMLSEEIASLPSLSKKCSLQLPDAYISWSPEAEAKFAELTGEGELVFTTQLLKPGQDHVTIDLLLDGENIIDRLLPLCQRKEPKEASKESLAVTTKAIITHVENTSRIYLQFSEKDSLMDIICEKLNGSKLQPKTEKAAVDDMCVVQFADDLEFYRSRILEVLEDDQYKVILIDYGNTTVVDKLYELPQEFTLIKPVAEICSMEPSAIFEKNKALTLTTFDALLDSCKGVVAVEFVNKSASPPVVRLTTKDKRSLKIYEHLQKLVQAELKLIQKRNENSECIISYGNSPKSFYVQMKHNSADLDLIVKTLQSLKKEKLKKLIDPTTNSNGVCYSQEDACYYRCSIKSVLDPSQGFEVFLLDYGNTLVVPEVWQLPQEIEPIPSLALHCQLSKIPMDVSDEKLEEAFAALLEQHFGELYEITTQPNEDETKPLIAELRINYKDFVQELVSTVTGVQKPLEAELHNCVVVQFDGPMSFYVQMESDVPALEQMTDKLLDAEQDLPAFSDLKEGALCVAQFPEDEVFYRAQIRKVLDDGKCEVHFIDFGNNAVTQQFRQLPEELAKPARYSRHCELDASTISKCDAALLQSFIDTRFSETFQVEILATKGTGTHVVRLFYQSKNISEKLQECQ.

3 positions are modified to phosphoserine: serine 226, serine 235, and serine 239. Tudor domains are found at residues 455–513 and 641–696; these read APEL…LLEI and QLIL…HLEM. The residue at position 800 (serine 800) is a Phosphoserine. The interval 840-996 is disordered; sequence QAVKSVSGSK…SSSESVAAAK (157 aa). Residues 890 to 900 show a composition bias toward low complexity; the sequence is STGSYSSGMSS. The span at 906–917 shows a compositional bias: polar residues; the sequence is RQQNGRTPIQSP. The segment covering 918 to 927 has biased composition (basic and acidic residues); it reads RHNEKQEAKK. Polar residues-rich tracts occupy residues 943–954 and 964–976; these read GQQGNQRSQNAP and QKST…SSKR. A compositionally biased stretch (low complexity) spans 977-995; it reads SSGVGSDIASSSSESVAAA. Tudor domains lie at 1062-1122 and 1355-1414; these read QLKV…FADP and KFDV…FYEH. The segment at 1515–1589 is disordered; that stretch reads EEDKGRKETV…KPATPVPEVV (75 aa). Positions 1540-1553 are enriched in basic and acidic residues; sequence NDKDREPKKSKPAE. Over residues 1569 to 1584 the composition is skewed to pro residues; the sequence is SPVPAEPAPVPKPATP. Tudor domains lie at 1662 to 1718, 1839 to 1898, 2023 to 2082, 2211 to 2269, and 2392 to 2451; these read NVVN…SHIE, GFEK…SLPS, KAAV…LIKP, TTNS…PIPS, and DLKE…KPAR.

As to quaternary structure, may form part of a piRNA processing complex consisting of tud, aub and AGO3. Interacts with AGO3 (when symmetrically dimethylated on Arg residues) and aub (when symmetrically dimethylated on Arg residues). Interacts with vls. Interacts with me31B/DDX6 (when symmetrically dimethylated on Arg residues).

Its subcellular location is the cytoplasm. The protein localises to the perinuclear region. It is found in the cytoplasmic ribonucleoprotein granule. In terms of biological role, may act via the Piwi-interacting RNA (piRNA) metabolic process mediated by aub and AGO3 Piwi proteins, which mediates the repression of transposable elements during meiosis by forming complexes composed of piRNAs and Piwi proteins and governs the methylation and subsequent repression of transposons. Required during oogenesis for the formation of primordial germ cells and for normal abdominal segmentation. Not involved in repression of retroelements. The sequence is that of Protein tudor from Drosophila melanogaster (Fruit fly).